We begin with the raw amino-acid sequence, 212 residues long: Peptide methionine sulfoxide reductase MsrA (212 aa).

Residue Cys-52 is part of the active site.

The protein belongs to the MsrA Met sulfoxide reductase family.

The enzyme catalyses L-methionyl-[protein] + [thioredoxin]-disulfide + H2O = L-methionyl-(S)-S-oxide-[protein] + [thioredoxin]-dithiol. The catalysed reaction is [thioredoxin]-disulfide + L-methionine + H2O = L-methionine (S)-S-oxide + [thioredoxin]-dithiol. Its function is as follows. Has an important function as a repair enzyme for proteins that have been inactivated by oxidation. Catalyzes the reversible oxidation-reduction of methionine sulfoxide in proteins to methionine. This Yersinia pseudotuberculosis serotype O:1b (strain IP 31758) protein is Peptide methionine sulfoxide reductase MsrA.